The following is a 349-amino-acid chain: Anaerobic nitrite reductase Glb1-3 (349 aa).

Globin domains are found at residues 13-162 (GFTE…AEMK) and 184-333 (CFTE…AEMK). The heme b site is built by Ser-56, Lys-70, His-74, Lys-104, Thr-108, His-109, Ser-227, Lys-241, His-245, Lys-275, Thr-279, and His-280.

It belongs to the plant globin family. In terms of assembly, monomer. Heme b serves as cofactor.

It localises to the cytoplasm. The protein resides in the nucleus. The catalysed reaction is Fe(III)-heme b-[protein] + nitric oxide + H2O = Fe(II)-heme b-[protein] + nitrite + 2 H(+). Functionally, phytoglobin that regulates the fine tuning of nitric oxide (NO) concentration in the cytosol in response to sudden changes in O(2) availability, and performs both symbiotic and nonsymbiotic functions. Exhibits NO dioxygenase activity in the presence of O(2) but nitrite reductase (NiR) activity in the absence of O(2) (e.g. during flooding or in waterlogged soil). May not function as an oxygen storage or transport protein. Extremely reactive toward the physiological ligands O(2), nitric oxide (NO), and nitrite with a very high affinity for O(2) through an hexacoordinate heme iron because of a very low dissociation constant. The polypeptide is Anaerobic nitrite reductase Glb1-3 (Medicago truncatula (Barrel medic)).